The sequence spans 842 residues: TATA box-binding protein-associated factor, RNA polymerase I, subunit C (842 aa).

Disordered stretches follow at residues 574–605 (SSLREPDHPAPERPASRAAAPPVDQGSTPSWT), 667–690 (RPGDLGTLPKAEPPPAPQCSQQDE), and 702–842 (QAAA…RMGF). A compositionally biased stretch (basic and acidic residues) spans 577-588 (REPDHPAPERPA). The span at 745-760 (DASSAPHSQDLSNSEA) shows a compositional bias: polar residues. Residues 783–794 (QHERRQTLRDYM) are compositionally biased toward basic and acidic residues. The residue at position 808 (threonine 808) is a Phosphothreonine. Residues 809-826 (PPSQTSSRQTRSFRQQTP) show a composition bias toward low complexity. Positions 833–842 (PPRKKPRMGF) are enriched in basic residues.

In terms of assembly, component of the transcription factor SL1/TIF-IB complex, composed of TBP and at least TAF1A, TAF1B, TAF1C and TAF1D. In the complex interacts directly with TBP, TAF1A and TAF1B. Interaction of the SL1/TIF-IB subunits with TBP excludes interaction of TBP with the transcription factor IID (TFIID) subunits. Interacts with MYC and RRN3. Interacts with p53/TP53; the interaction prevents the association of SL1/TIF-IB with UBTF and represses RNA polymerase I transcription. Part of Pol I pre-initiation complex (PIC), in which Pol I core assembles with RRN3 and promoter-bound UTBF and SL1/TIF-IB complex.

The protein resides in the nucleus. It localises to the nucleolus. In terms of biological role, component of the transcription factor SL1/TIF-IB complex, which is involved in the assembly of the PIC (pre-initiation complex) during RNA polymerase I-dependent transcription. The rate of PIC formation probably is primarily dependent on the rate of association of SL1/TIF-IB with the rDNA promoter. SL1/TIF-IB is involved in stabilization of nucleolar transcription factor 1/UBTF on rDNA. Formation of SL1/TIF-IB excludes the association of TBP with TFIID subunits. Recruits RNA polymerase I to the rRNA gene promoter via interaction with RRN3. The sequence is that of TATA box-binding protein-associated factor, RNA polymerase I, subunit C (Taf1c) from Rattus norvegicus (Rat).